A 997-amino-acid polypeptide reads, in one-letter code: Bifunctional purine synthesis protein purC/E (997 aa).

The interval 1–305 is SAICAR synthetase; that stretch reads MTTAINNNIV…NNNNNNNNNS (305 aa). Composition is skewed to low complexity over residues 294 to 323, 342 to 355, and 524 to 536; these read LNNN…SLPN, QQQS…NVNS, and TSTS…TTTS. Disordered stretches follow at residues 294–355, 518–538, 550–569, and 575–604; these read LNNN…NVNS, IPVD…TSNA, INSN…QQQT, and PTII…SSII. Residues 305-997 form an AIR carboxylase region; sequence SNNNNNNTSS…GRKMGHVTQQ (693 aa). A compositionally biased stretch (low complexity) spans 575 to 597; sequence PTIINTPTPVRSSVSRSQSPLPS. ATP is bound by residues Arg-728, Lys-768, Gln-779, 807–810, and Glu-815; that span reads EQYI. The 196-residue stretch at 732 to 927 folds into the ATP-grasp domain; it reads KTFIQSLDIP…QFEQLIRCVC (196 aa). Glu-880 and Glu-898 together coordinate Mg(2+). 897–898 contributes to the ATP binding site; it reads NE.

It in the N-terminal section; belongs to the SAICAR synthetase family. The protein in the C-terminal section; belongs to the AIR carboxylase family. Class I subfamily. It depends on Mg(2+) as a cofactor. The cofactor is Mn(2+).

It carries out the reaction 5-amino-1-(5-phospho-D-ribosyl)imidazole-4-carboxylate + L-aspartate + ATP = (2S)-2-[5-amino-1-(5-phospho-beta-D-ribosyl)imidazole-4-carboxamido]succinate + ADP + phosphate + 2 H(+). It catalyses the reaction 5-amino-1-(5-phospho-D-ribosyl)imidazole-4-carboxylate + H(+) = 5-amino-1-(5-phospho-beta-D-ribosyl)imidazole + CO2. Its pathway is purine metabolism; IMP biosynthesis via de novo pathway; 5-amino-1-(5-phospho-D-ribosyl)imidazole-4-carboxylate from 5-amino-1-(5-phospho-D-ribosyl)imidazole (carboxylase route): step 1/1. The protein operates within purine metabolism; IMP biosynthesis via de novo pathway; 5-amino-1-(5-phospho-D-ribosyl)imidazole-4-carboxamide from 5-amino-1-(5-phospho-D-ribosyl)imidazole-4-carboxylate: step 1/2. Its function is as follows. Bifunctional enzyme involved in de novo IMP synthesis, an essential step for de nove purine synthesis. This chain is Bifunctional purine synthesis protein purC/E (purC/E), found in Dictyostelium discoideum (Social amoeba).